The sequence spans 290 residues: F-box protein PP2-A13 (290 aa).

An F-box domain is found at R21–S67.

As to quaternary structure, part of a SCF (ASK-cullin-F-box) protein ligase complex. Interacts with SKP1A/ASK1, SKP1B/ASK2, ASK5, ASK11 and ASK13.

Its subcellular location is the nucleus. It functions in the pathway protein modification; protein ubiquitination. Component of SCF(ASK-cullin-F-box) E3 ubiquitin ligase complexes, which may mediate the ubiquitination and subsequent proteasomal degradation of target proteins. In Arabidopsis thaliana (Mouse-ear cress), this protein is F-box protein PP2-A13 (PP2A13).